The primary structure comprises 1173 residues: MSTIDLPTSSLPGSSGDPSGTEMSHSDVDVSVDIDVIFPDHTQTLSFSLLLSNTIHDVRQVILELMLAPPHTCFHLEYKREKLHSFLEIGQIPHLKLSKTRKIVLEVVLDPYTERESKYHIYTLLEFLSRKLPSSSTSPGIRAGFCIFPSLNIPSGENLQIKSSSSLEEINKIPENIVTQSLSYTNLLKKFETSPNPSNNGCFRSLALSGWNPVPAEFVIQGHLLYLTVLTIEGKTYNITSHVSGFYVNNCTSTKFDPSPCDDLQSHSLVLLLEQLSPLFKERLHLSLNDYKSGDAIAQASITGTLPQAPWITFPVPHRADLSRTQKSELFPYIENQGNLRDWNEEIQSTREMDHEDVQDRVLRERLTVKTLQDFTDMAVEGAIDMVNGNIPSLNPLEPTASQMFVHNNIFFSYGRDSVGIFSTKGGDSAAYSAVGKDILAIRLLNQFDLSNPSLLGTCVVDYAGHRVVAQTIVPGIFKQLENGSSHLIYGKVEGESDFRFDESFEGELSRISDLLHIKKHFFVDGKEKSFPLYTSMDAKALKGSDGRTYLMDLYSLFPLDAQFLEVISDEKNEEFPAYPHKLVHVRPELVQLFYEMKLQAFVNANHNAPKKKNLNDSLKSVELEGNGIKLSSEKGKNNVNKVRNDNARFDCGFNPDCFRSDYIFPPDNKELYDKDIENSYALSQYLHAEVIPNFVKSLSEPSSFLPIDGVALCRAMHRSGINIRYLGEIANIILQKSPNNVILLKLVTSEIFIRSIKHVFRNFLAVVPQVLRSHLLSHLLNNLFTVYGYVEPTKPLINENIANLFFQATQVIYSINSTSLYSSIKKEASSRFRFNLTDDLLHSLNPICILRGTCLRLGIQISCKDYFSNKSDDKICEEHAVPNGSTKFTGKKGNKKKRNLGKSQNTTNRQVESEQINIFRPKDILNLMPVIKTCIPYSGLAQESLEACKACLLQGNKELCYNLLNESLSLHEQIYGVLHTEVARAYCQLAMIYHQLEKKEEAVELARKAVIVCERFLGFDSSETSLAYMNLSLYEFSQKNEMQAVMHMQHALKLWYLVFGPDHPNTINSFTNLSLMLHGSEKFIQSQKCLQIAVDLSDKIFGKTTPTASLYLQLAQLMVLNKDSRSALHAVRVAYDILKETLGPDHQNTKEAEHWLSEFTALAVNQERQSRT.

Over residues 1–21 (MSTIDLPTSSLPGSSGDPSGT) the composition is skewed to low complexity. The tract at residues 1–25 (MSTIDLPTSSLPGSSGDPSGTEMSH) is disordered. The Clu domain occupies 316-565 (VPHRADLSRT…SLFPLDAQFL (250 aa)). Positions 888 to 910 (KFTGKKGNKKKRNLGKSQNTTNR) are disordered. The segment covering 890–901 (TGKKGNKKKRNL) has biased composition (basic residues). Residues 984-1017 (ARAYCQLAMIYHQLEKKEEAVELARKAVIVCERF) form a TPR repeat.

This sequence belongs to the CLU family. As to quaternary structure, may associate with the eukaryotic translation initiation factor 3 (eIF-3) complex.

It is found in the cytoplasm. Its function is as follows. mRNA-binding protein involved in proper cytoplasmic distribution of mitochondria. This Schizosaccharomyces pombe (strain 972 / ATCC 24843) (Fission yeast) protein is Clustered mitochondria protein homolog.